A 290-amino-acid chain; its full sequence is 33 kDa chaperonin (290 aa).

Intrachain disulfides connect Cys-231–Cys-233 and Cys-263–Cys-266.

Belongs to the HSP33 family. Under oxidizing conditions two disulfide bonds are formed involving the reactive cysteines. Under reducing conditions zinc is bound to the reactive cysteines and the protein is inactive.

It localises to the cytoplasm. Redox regulated molecular chaperone. Protects both thermally unfolding and oxidatively damaged proteins from irreversible aggregation. Plays an important role in the bacterial defense system toward oxidative stress. The protein is 33 kDa chaperonin of Thermotoga petrophila (strain ATCC BAA-488 / DSM 13995 / JCM 10881 / RKU-1).